Reading from the N-terminus, the 650-residue chain is XK-related protein 4 (650 aa).

Residues 1–15 (MAAKSDGRLKMKKSS) show a composition bias toward basic and acidic residues. Positions 1-44 (MAAKSDGRLKMKKSSDVAFTPLQNSDHSGSVQGLAPGLPSGSGA) are disordered. Residues 21-31 (PLQNSDHSGSV) are compositionally biased toward polar residues. The next 2 membrane-spanning stretches (helical) occupy residues 114-134 (WILA…WLAV) and 144-164 (WFGL…VFSF). Serine 200 bears the Phosphoserine mark. The interval 200–238 (SAAGEGEARPSTPQRQASNASKSNIAAANSGSNSSGATR) is disordered. The span at 216-238 (ASNASKSNIAAANSGSNSSGATR) shows a compositional bias: low complexity. 8 helical membrane passes run 248-268 (CSFC…GQIW), 306-326 (HLLA…CIIV), 331-351 (LQAL…WALA), 365-385 (KPIS…TIAA), 396-418 (VFQL…WIVH), 428-448 (WEEI…WFNV), 457-477 (LFIY…LWYL), and 487-507 (FAIP…VFML).

It belongs to the XK family. In terms of assembly, homodimer; homodimerization takes place upon caspase cleavage. Interacts with the processed C-terminus of XRCC4 (protein XRCC4, C-terminus); interaction promotes the phospholipid scramblase activity. Post-translationally, undergoes proteolytic processing by caspase-3 (CASP3), caspase-6 (CASP6) and caspase-7 (CASP7) to generate the XK-related protein 4, processed form, leading to its activation.

It is found in the cell membrane. The catalysed reaction is a 1,2-diacyl-sn-glycero-3-phospho-L-serine(in) = a 1,2-diacyl-sn-glycero-3-phospho-L-serine(out). Its activity is regulated as follows. Phospholipid scramblase activity is activated upon caspase cleavage to generate the XK-related protein 4, processed form. Does not act prior the onset of apoptosis. Homodimerizes upon caspase cleavage. Phospholipid scramblase activity is activated following interaction with the processed C-terminus of XRCC4 (protein XRCC4, C-terminus). Functionally, phospholipid scramblase that promotes phosphatidylserine exposure on apoptotic cell surface. Phosphatidylserine is a specific marker only present at the surface of apoptotic cells and acts as a specific signal for engulfment. The chain is XK-related protein 4 from Homo sapiens (Human).